The chain runs to 331 residues: Cytosolic 5'-nucleotidase 3A (331 aa).

The active-site Nucleophile is Asp83. Positions 83 and 85 each coordinate Mg(2+). Asp85 functions as the Proton donor in the catalytic mechanism. Glu130 serves as a coordination point for CMP. N(7)-methyl-GMP is bound by residues Glu130 and Ser151. Residues 198 to 199 (SA) and Lys247 contribute to the substrate site. Asp272 provides a ligand contact to Mg(2+).

The protein belongs to the pyrimidine 5'-nucleotidase family.

The protein resides in the cytoplasm. It carries out the reaction N(7)-methyl-GMP + H2O = N(7)-methylguanosine + phosphate. It catalyses the reaction a ribonucleoside 5'-phosphate + H2O = a ribonucleoside + phosphate. Its function is as follows. Nucleotidase which shows specific activity towards cytidine monophosphate (CMP) and 7-methylguanosine monophosphate (m(7)GMP). CMP seems to be the preferred substrate. The chain is Cytosolic 5'-nucleotidase 3A (NT5C3A) from Gallus gallus (Chicken).